We begin with the raw amino-acid sequence, 4660 residues long: MERGAAAAAWMLLLAIAACLAPVSGQECGSGNFRCDNGYCIPASWRCDGTRDCLDDTDEIGCPPRSCGSGFFLCPAEGTCIPSSWVCDQDKDCSDGADEQQNCPGTTCSSQQLTCSNGQCVPIEYRCDHVSDCPDGSDERNCYYPTCDQLTCANGACYNTSQKCDHKVDCRDSSDEANCTTLCSQKEFQCGSGECILRAYVCDHDNDCEDNSDEHNCNYDTCGGHQFTCSNGQCINQNWVCDGDDDCQDSGDEDGCESNQRHHTCYPREWACPGSGRCISMDKVCDGVPDCPEGEDENNATSGRYCGTGLCSILNCEYQCHQTPYGGECFCPPGHIINSNDSRTCIDFDDCQIWGICDQKCESRQGRHQCLCEEGYILERGQHCKSNDSFSAASIIFSNGRDLLVGDLHGRNFRILAESKNRGIVMGVDFHYQKHRVFWTDPMQAKVFSTDINGLNTQEILNVSIDAPENLAVDWINNKLYLVETRVNRIDVVNLEGNQRVTLITENLGHPRGIALDPTVGYLFFSDWGSLSGQPKVERAFMDGSNRKDLVTTKLGWPAGITLDLVSKRVYWVDSRYDYIETVTYDGIQRKTVARGGSLVPHPFGISLFEEHVFFTDWTKMAVMKANKFTDTNPQVYHQSSLTPFGVTVYHALRQPNATNPCGNNNGGCAQICVLSHRTDNGGLGYRCKCEFGFELDADEHHCVAVKNFLLFSSQTAVRGIPFTLSTQEDVMVPVTGSPSFFVGIDFDAQHSTIFYSDLSKNIIYQQKIDGTGKEVITANRLQNVECLSFDWISRNLYWTDGGSKSVTVMKLADKSRRQIISNLNNPRSIVVHPAAGYMFLSDWFRPAKIMRAWSDGSHLMPIVNTSLGWPNGLAIDWSTSRLYWVDAFFDKIEHSNLDGLDRKRLGHVDQMTHPFGLTVFKDNVFLTDWRLGAIIRVRKSDGGDMTVVRRGISSIMHVKAYDADLQTGTNYCSQTTHPNGDCSHFCFPVPNFQRVCGCPYGMKLQRDQMTCEGDPAREPPTQQCGSSSFPCNNGKCVPSIFRCDGVDDCHDNSDEHQCGALNNTCSSSAFTCVHGGQCIPGQWRCDKQNDCLDGSDEQNCPTRSPSSTCPPTSFTCDNHMCIPKEWVCDTDNDCSDGSDEKNCQASGTCHPTQFRCPDHRCISPLYVCDGDKDCVDGSDEAGCVLNCTSSQFKCADGSSCINSRYRCDGVYDCKDNSDEAGCPTRPPGMCHPDEFQCQGDGTCIPNTWECDGHPDCIQGSDEHNGCVPKTCSPSHFLCDNGNCIYNSWVCDGDNDCRDMSDEKDCPTQPFHCPSSQWQCPGYSICVNLSALCDGVFDCPNGTDESPLCNQDSCLHFNGGCTHRCIQGPFGATCVCPIGYQLANDTKTCEDVNECDIPGFCSQHCVNMRGSFRCACDPEYTLESDGRTCKVTASENLLLVVASRDKIIMDNITAHTHNIYSLVQDVSFVVALDFDSVTGRVFWSDLLEGKTWSAFQNGTDKRVVHDSGLSLTEMIAVDWIGRNIYWTDYTLETIEVSKIDGSHRTVLISKNVTKPRGLALDPRMGDNVMFWSDWGHHPRIERASMDGTMRTVIVQEKIYWPCGLSIDYPNRLIYFMDAYLDYIEFCDYDGQNRRQVIASDLVLHHPHALTLFEDSVFWTDRGTHQVMQANKWHGRNQSVVMYSVPQPLGIIAIHPSRQPSSPNPCASATCSHLCLLSAQEPRHYSCACPSGWNLSDDSVNCVRGDQPFLISVRENVIFGISLDPEVKSNDAMVPISGIQHGYDVEFDDSEQFIYWVENPGEIHRVKTDGSNRTAFAPLSLLGSSLGLALDWVSRNIYYTTPASRSIEVLTLRGDTRYGKTLITNDGTPLGVGFPVGIAVDPARGKLYWSDHGTDSGVPAKIASANMDGTSLKILFTGNMEHLEVVTLDIQEQKLYWAVTSRGVIERGNVDGTERMILVHHLAHPWGLVVHGSFLYYSDEQYEVIERVDKSSGSNKVVFRDNIPYLRGLRVYHHRNAADSSNGCSNNPNACQQICLPVPGGMFSCACASGFKLSPDGRSCSPYNSFIVVSMLPAVRGFSLELSDHSEAMVPVAGQGRNVLHADVDVANGFIYWCDFSSSVRSSNGIRRIKPNGSNFTNIVTYGIGANGIRGVAVDWVAGNLYFTNAFVYETLIEVIRINTTYRRVLLKVSVDMPRHIVVDPKHRYLFWADYGQKPKIERSFLDCTNRTVLVSEGIVTPRGLAVDHDTGYIYWVDDSLDIIARIHRDGGESQVVRYGSRYPTPYGITVFGESIIWVDRNLRKVFQASKQPGNTDPPTVIRDSINLLRDVTIFDEHVQPLSPAELNNNPCLQSNGGCSHFCFALPELPTPKCGCAFGTLEDDGKNCATSREDFLIYSLNNSLRSLHFDPQDHNLPFQAISVEGMAIALDYDRRNNRIFFTQKLNPIRGQISYVNLYSGASSPTILLSNIGVTDGIAFDWINRRIYYSDFSNQTINSMAEDGSNRAVIARVSKPRAIVLDPCRGYMYWTDWGTNAKIERATLGGNFRVPIVNTSLVWPNGLTLDLETDLLYWADASLQKIERSTLTGSNREVVISTAFHSFGLTVYGQYIYWTDFYTKKIYRANKYDGSDLIAMTTRLPTQPSGISTVVKTQQQQCSNPCDQFNGGCSHICAPGPNGAECQCPHEGSWYLANDNKYCVVDTGARCNQFQFTCLNGRCISQDWKCDNDNDCGDGSDELPTVCAFHTCRSTAFTCANGRCVPYHYRCDFYNDCGDNSDEAGCLFRSCNSTTEFTCSNGRCIPLSYVCNGINNCHDNDTSDEKNCPPITCQPDFAKCQTTNICVPRAFLCDGDNDCGDGSDENPIYCASHTCRSNEFQCVSPHRCIPSYWFCDGEADCVDSSDEPDTCGHSLNSCSANQFHCDNGRCISSSWVCDGDNDCGDMSDEDQRHHCELQNCSSTEFTCINSRPPNRRCIPQHWVCDGDADCADALDELQNCTMRACSTGEFSCANGRCIRQSFRCDRRNDCGDYSDERGCSYPPCRDDQFTCQNGQCITKLYVCDEDNDCGDGSDEQEHLCHTPEPTCPPHQFRCDNGHCIEMGTVCNHVDDCSDNSDEKGCGINECQDSSISHCDHNCTDTITSFYCSCLPGYKLMSDKRTCVDIDECKETPQLCSQKCENVIGSYICKCAPGYIREPDGKSCRQNSNIEPYLVFSNRYYIRNLTIDGTSYSLILQGLGNVVALDFDRVEERLYWIDAEKQIIERMFLNKTNQETIISHRLRRAESLAVDWVSRKLYWLDAILDCLFVSDLEGRQRKMLAQHCVDANNTFCFENPRGIVLHPQRGYVYWADWGDHAYIARIGMDGTNKTVIISTKIEWPNAITIDYTNDLLYWADAHLGYIEFSDLEGHHRHTVYDGTLPHPFALTIFEDTVFWTDWNTRTVEKGNKYDGSGRVVLVNTTHKPFDIHVLHPYRQPIMSNPCATNNGGCSHLCLIKAGGRGFTCECPDDFQTVQLRDRTLCMPMCSSTQFLCGNNEKCIPIWWKCDGQKDCSDGSDESDLCPHRFCRLGQFQCRDGNCTSPQALCNARQDCADGSDEDRVLCEHHRCEANEWQCANKRCIPEYWQCDSVDDCLDNSDEDPSHCASRTCRPGQFKCNNGRCIPQSWKCDVDNDCGDYSDEPIHECMTAAYNCDNHTEFSCKTNYRCIPQWAVCNGFDDCRDNSDEQGCESVPCHPSGDFRCGNHHCIPLRWKCDGIDDCGDNSDEESCVPRECTESEFRCADQQCIPSRWVCDQENDCGDNSDERDCEMKTCHPEHFQCTSGHCVPKALACDGRADCLDASDESACPTRFPNGTYCPAAMFECKNHVCIQSFWICDGENDCVDGSDEEIHLCFNVPCESPQRFRCDNSRCIYGHQLCNGVDDCGDGSDEKEEHCRKPTHKPCTDTEYKCSNGNCVSQHYVCDNVDDCGDLSDETGCNLGENRTCAEKICEQNCTQLSNGGFICSCRPGFKPSTLDKNSCQDINECEEFGICPQSCRNSKGSYECFCVDGFKSMSTHYGERCAADGSPPLLLLPENVRIRKYNISSEKFSEYLEEEEHIQAIDYDWDPEGIGLSVVYYTVLSQGSQFGAIKRAYLPDFESGSNNPVREVDLGLKYLMQPDGLAVDWVGRHIYWSDAKSQRIEVATLDGRYRKWLITTQLDQPAAIAVNPKLGLMFWTDQGKQPKIESAWMNGEHRSVLASANLGWPNGLSIDYLNGDRIYWSDSKEDVIESIKYDGTDRRLIINDAMKPFSLDIFEDQLYWVAKEKGEVWRQNKFGKGNKEKLLVVNPWLTQVRIFHQLRYNQSVSNPCKQVCSHLCLLRPGGYSCACPQGSDFVTGSTVECDAASELPITMPSPCRCMHGGSCYFDENDLPKCKCSSGYSGEYCEIGLSRGIPPGTTMALLLTFAMVIIVGALVLVGFFHYRKTGSLLPSLPKLPSLSSLAKPSENGNGVTFRSGADVNMDIGVSPFGPETIIDRSMAMNEQFVMEVGKQPVIFENPMYAAKDSTSKVGLAVQGPSVSSQVTVPENVENQNYGRSIDPSEIVPEPKPASPGADETQGTKWNIFKRKPKQTTNFENPIYAEMDTEQKEAVAVAPPPSPSLPAKASKRSSTPGYTATEDTFKDTANLVKEDSDV.

The first 25 residues, Met1–Gly25, serve as a signal peptide directing secretion. Over Gln26–Thr4425 the chain is Extracellular. 7 consecutive LDL-receptor class A domains span residues Glu27–Pro63, Ser66–Pro104, Thr107–Tyr143, Thr146–Thr180, Leu182–Asn218, Thr221–Glu257, and Thr264–Gly307. Cystine bridges form between Cys28–Cys40, Cys35–Cys53, Cys47–Cys62, Cys67–Cys80, Cys74–Cys93, Cys87–Cys103, Cys108–Cys120, Cys115–Cys133, Cys127–Cys142, Cys147–Cys157, Cys152–Cys170, Cys164–Cys179, Cys183–Cys195, Cys190–Cys208, Cys202–Cys217, Cys222–Cys234, Cys229–Cys247, Cys241–Cys256, Cys265–Cys278, Cys272–Cys291, and Cys285–Cys306. N-linked (GlcNAc...) asparagine glycosylation is found at Asn159 and Asn178. N-linked (GlcNAc...) asparagine glycans are attached at residues Asn299, Asn340, Asn387, and Asn462. LDL-receptor class B repeat units lie at residues His435–Asn477, Asn478–Val520, Gly521–Ser567, and Lys568–His612. N-linked (GlcNAc...) asparagine glycosylation is present at Asn657. 4 LDL-receptor class B repeats span residues Ser752 to Ser794, Arg795 to Ala836, Gly837 to Thr880, and Ser881 to Asn924. N-linked (GlcNAc...) asparagine glycosylation is present at Asn865. An LDL-receptor class A 8 domain is found at Gln1024 to Gly1060. Cystine bridges form between Cys1025–Cys1037, Cys1032–Cys1050, and Cys1044–Cys1059. Asn1063 is a glycosylation site (N-linked (GlcNAc...) asparagine). LDL-receptor class A domains are found at residues Thr1065–Pro1102, Thr1109–Gln1145, Thr1149–Val1185, Asn1187–Pro1224, Met1230–Val1268, Thr1271–Pro1307, and His1312–Asn1350. Cystine bridges form between Cys1066/Cys1079, Cys1073/Cys1092, Cys1086/Cys1101, Cys1110/Cys1122, Cys1117/Cys1135, Cys1129/Cys1144, Cys1150/Cys1162, Cys1157/Cys1175, and Cys1169/Cys1184. Ca(2+)-binding residues include Trp1127, Asp1130, Asp1132, Asp1134, Asp1140, and Glu1141. An N-linked (GlcNAc...) asparagine glycan is attached at Asn1187. Cystine bridges form between Cys1188-Cys1201, Cys1195-Cys1214, Cys1208-Cys1223, Cys1231-Cys1244, Cys1238-Cys1257, Cys1251-Cys1267, Cys1272-Cys1284, Cys1279-Cys1297, Cys1291-Cys1306, Cys1313-Cys1326, Cys1320-Cys1339, Cys1333-Cys1349, Cys1354-Cys1365, Cys1361-Cys1374, Cys1376-Cys1389, Cys1395-Cys1405, Cys1401-Cys1414, and Cys1416-Cys1429. Residues Tyr1206, Asp1209, Val1211, Asp1213, Asp1219, and Glu1220 each coordinate Ca(2+). Residues Asn1328 and Asn1341 are each glycosylated (N-linked (GlcNAc...) asparagine). Positions Asn1350–Glu1390 constitute an EGF-like 1 domain. Residue Asn1384 is glycosylated (N-linked (GlcNAc...) asparagine). Residues Asp1391–Lys1430 enclose the EGF-like 2; calcium-binding domain. 3 N-linked (GlcNAc...) asparagine glycosylation sites follow: Asn1451, Asn1497, and Asn1551. LDL-receptor class B repeat units lie at residues Gly1479–Gly1521, Arg1522–Met1564, Asn1567–Asn1610, Arg1611–Ser1655, and Val1656–Ser1696. Asn1676, Asn1733, and Asn1811 each carry an N-linked (GlcNAc...) asparagine glycan. LDL-receptor class B repeat units follow at residues Gln1791–Ser1833, Arg1834–Arg1883, Gly1884–Glu1931, Gln1932–Phe1973, Leu1974–Arg2014, Gly2108–Ala2157, Gly2158–His2202, Arg2203–Thr2246, Gly2247–Ser2290, and Ile2291–His2333. N-linked (GlcNAc...) asparagine glycans are attached at residues Asn2131, Asn2134, Asn2178, and Asn2225. A glycan (N-linked (GlcNAc...) asparagine) is linked at Asn2396. LDL-receptor class B repeat units lie at residues Asn2432–Asn2478, Arg2479–Arg2519, Gly2520–Thr2563, Asp2564–Tyr2605, and Ile2606–Thr2647. 2 N-linked (GlcNAc...) asparagine glycosylation sites follow: Asn2488 and Asn2548. LDL-receptor class A domains lie at Arg2700 to Ala2738, Thr2741 to Leu2777, Ser2780 to Pro2819, Thr2822 to Ala2861, Thr2864 to Gly2902, Ser2907 to Glu2946, Asn2949 to Thr2991, Ala2994 to Ser3030, Pro3033 to His3071, and Thr3076 to Gly3112. 18 cysteine pairs are disulfide-bonded: Cys2701–Cys2713, Cys2708–Cys2726, Cys2720–Cys2737, Cys2742–Cys2754, Cys2749–Cys2767, Cys2761–Cys2776, Cys2781–Cys2794, Cys2789–Cys2807, Cys2801–Cys2818, Cys2823–Cys2836, Cys2830–Cys2849, Cys2843–Cys2860, Cys2865–Cys2878, Cys2872–Cys2891, Cys2885–Cys2901, Cys2908–Cys2920, Cys2915–Cys2933, and Cys2927–Cys2945. Residue Asn2782 is glycosylated (N-linked (GlcNAc...) asparagine). Residue Asn2810 is glycosylated (N-linked (GlcNAc...) asparagine). Asn2949 carries an N-linked (GlcNAc...) asparagine glycan. 18 disulfide bridges follow: Cys2950–Cys2967, Cys2957–Cys2980, Cys2974–Cys2990, Cys2995–Cys3007, Cys3002–Cys3020, Cys3014–Cys3029, Cys3034–Cys3046, Cys3041–Cys3059, Cys3053–Cys3070, Cys3077–Cys3089, Cys3084–Cys3102, Cys3096–Cys3111, Cys3116–Cys3128, Cys3124–Cys3137, Cys3139–Cys3152, Cys3158–Cys3169, Cys3165–Cys3178, and Cys3180–Cys3193. Residue Asn2989 is glycosylated (N-linked (GlcNAc...) asparagine). One can recognise an EGF-like 3 domain in the interval Gly3112 to Val3153. Residue Asn3127 is glycosylated (N-linked (GlcNAc...) asparagine). In terms of domain architecture, EGF-like 4; calcium-binding spans Asp3154 to Arg3194. 4 N-linked (GlcNAc...) asparagine glycosylation sites follow: Asn3213, Asn3259, Asn3317, and Asn3357. LDL-receptor class B repeat units follow at residues Glu3241–Ser3283, Arg3284–Arg3326, Gly3335–Asn3378, Asp3379–Thr3421, and Val3422–Tyr3462. Asn3448 carries N-linked (GlcNAc...) asparagine glycosylation. LDL-receptor class A domains lie at Met3513–Pro3551, Phe3554–Glu3592, Arg3595–Ala3633, Thr3636–Met3674, Asn3679–Glu3717, Pro3720–Val3757, Glu3760–Glu3796, and Thr3799–Pro3835. 24 disulfides stabilise this stretch: Cys3514/Cys3527, Cys3521/Cys3540, Cys3534/Cys3550, Cys3555/Cys3567, Cys3562/Cys3580, Cys3574/Cys3591, Cys3596/Cys3608, Cys3603/Cys3621, Cys3615/Cys3632, Cys3637/Cys3649, Cys3644/Cys3662, Cys3656/Cys3673, Cys3680/Cys3694, Cys3688/Cys3707, Cys3701/Cys3716, Cys3721/Cys3734, Cys3729/Cys3747, Cys3741/Cys3756, Cys3761/Cys3773, Cys3768/Cys3786, Cys3780/Cys3795, Cys3800/Cys3812, Cys3807/Cys3825, and Cys3819/Cys3834. Asn3566 carries N-linked (GlcNAc...) asparagine glycosylation. N-linked (GlcNAc...) asparagine glycosylation occurs at Asn3682. A glycan (N-linked (GlcNAc...) asparagine) is linked at Asn3840. LDL-receptor class A domains lie at Tyr3843–Phe3881, Pro3884–Arg3923, and Pro3929–Asn3965. 9 disulfides stabilise this stretch: Cys3844/Cys3856, Cys3851/Cys3869, Cys3863/Cys3880, Cys3885/Cys3898, Cys3893/Cys3911, Cys3905/Cys3922, Cys3930/Cys3942, Cys3937/Cys3955, and Cys3949/Cys3964. N-linked (GlcNAc...) asparagine glycosylation is found at Asn3969 and Asn3980. The 42-residue stretch at Asp4009–Ala4050 folds into the EGF-like 5; calcium-binding domain. Disulfide bonds link Cys4013–Cys4023, Cys4019–Cys4032, and Cys4034–Cys4049. Residue Asn4070 is glycosylated (N-linked (GlcNAc...) asparagine). LDL-receptor class B repeat units lie at residues Arg4156 to Leu4198, Gly4199 to Asn4242, and Asp4244 to Gln4285. N-linked (GlcNAc...) asparagine glycosylation is present at Asn4329. Positions Met4379–Glu4413 constitute an EGF-like 6 domain. Cystine bridges form between Cys4383/Cys4391, Cys4385/Cys4401, and Cys4403/Cys4412. Residues Met4426 to Phe4446 traverse the membrane as a helical segment. Residues Phe4447 to Val4660 are Cytoplasmic-facing. The SH3-binding signature appears at Ser4454–Pro4463. Residues Pro4457–Leu4462 carry the PxLPxI/L motif 1; mediates interaction with ANKRA2 motif. The PxLPxI/L motif 2; mediates interaction with ANKRA2 motif lies at Pro4460–Leu4465. Ser4464 and Ser4467 each carry phosphoserine. The Endocytosis signal signature appears at Phe4522 to Tyr4527. Positions Gln4558 to Val4660 are disordered. Phosphoserine is present on Ser4577. The tract at residues Gln4597–Asp4610 is interaction with DAB2. An NPXY motif motif is present at residues Asn4603 to Tyr4606. The short motif at Tyr4606–Met4609 is the SH2-binding element. An SH3-binding motif is present at residues Val4619–Lys4630. Phosphoserine is present on Ser4624. Positions Leu4627 to Ser4636 are enriched in low complexity. Thr4637 bears the Phosphothreonine mark. Ser4658 carries the phosphoserine modification.

The protein belongs to the LDLR family. Binds plasminogen, extracellular matrix components, plasminogen activator-plasminogen activator inhibitor type I complex, apolipoprotein E-enriched beta-VLDL, lipoprotein lipase, lactoferrin, CLU/clusterin and calcium. Forms a multimeric complex together with LRPAP1. Interacts (via PxLPxI/L motif) with ANKRA2 (via ankyrin repeats). Interacts with LRP2BP. Interacts (via NPXY motif) with DAB2; the interaction is not affected by tyrosine phosphorylation of the NPXY motif. Interacts with MB. Interacts with BMP4. Interacts with the Sonic hedgehog protein N-product which is the active product of SHH. Interacts with CST3 in a calcium-dependent manner. Interacts with the vitamin-D binding protein GC/DBP. Interacts with sex hormone-binding protein SHBG. Interacts with angiotensin-2. Also interacts with angiotensin 1-7. Interacts with APOM. Interacts with selenoprotein SEPP1. Interacts with LEP. Interacts with ALB. Interacts with the antiapoptotic protein BIRC5/survivin. Interacts with matrix metalloproteinase MMP2 in complex with metalloproteinase inhibitor TIMP1. In neurons, forms a trimeric complex with APP and APPB1/FE65. Interacts with LDLRAP1/ARH; mediates trafficking of LRP2 to the endocytic recycling compartment. Does not interact with beta-amyloid protein 40 alone but interacts with the complex composed of beta-amyloid protein 40 and CLU/APOJ. Interacts with MDK. A fraction undergoes proteolytic cleavage of the extracellular domain at the cell membrane to generate a cytoplasmic tail fragment. This is internalized into the early endosome from where it trafficks in an LDLRAP1/ARH-dependent manner to the endocytic recycling compartment (ERC). In the ERC, it is further cleaved by gamma-secretase to release a fragment which translocates to the nucleus and mediates transcriptional repression. In terms of processing, N-glycosylation is required for ligand binding. Contains core-fucosylated N-glycans in kidney proximal convoluted tubules (PCTs) and hybrid-type N-glycans in proximal straight tubules (PSTs). Interacts with ligands in a glycoform-dependent manner. Retinol-binding protein and the vitamin D carrier GC/DBP are endocytosed primarily by PCTs, albumin is endocytosed equally by PCTs and PSTs, and the aminoglycoside kanamycin is endocytosed primarily by PSTs. As to expression, in the inner ear, strongly expressed in the marginal cells of the stria vascularis (at protein level). In the female reproductive tract, expressed on the luminal side of the uterine epithelium (at protein level). In the adult brain, expressed in ependymal cells of the lateral ventricles where expression is restricted to the ependyma that faces the stem cell niche (at protein level). Expressed in neurons throughout the brain including in the hippocampus, limbic cortices and cerebellum (at protein level). In the developing optic nerve, expressed exclusively in astrocytes at 14.5 dpc, 16.5 dpc and 18.5 dpc (at protein level).

It is found in the apical cell membrane. The protein resides in the endosome lumen. Its subcellular location is the membrane. The protein localises to the coated pit. It localises to the cell projection. It is found in the dendrite. The protein resides in the axon. In terms of biological role, multiligand endocytic receptor. Acts together with CUBN to mediate endocytosis of high-density lipoproteins. Mediates receptor-mediated uptake of polybasic drugs such as aprotinin, aminoglycosides and polymyxin B. In the kidney, mediates the tubular uptake and clearance of leptin. Also mediates transport of leptin across the blood-brain barrier through endocytosis at the choroid plexus epithelium. Endocytosis of leptin in neuronal cells is required for hypothalamic leptin signaling and leptin-mediated regulation of feeding and body weight. Mediates endocytosis and subsequent lysosomal degradation of CST3 in kidney proximal tubule cells. Mediates renal uptake of 25-hydroxyvitamin D3 in complex with the vitamin D3 transporter GC/DBP. Mediates renal uptake of metallothionein-bound heavy metals. Together with CUBN, mediates renal reabsorption of myoglobin. Mediates renal uptake and subsequent lysosomal degradation of APOM. Plays a role in kidney selenium homeostasis by mediating renal endocytosis of selenoprotein SEPP1. Mediates renal uptake of the antiapoptotic protein BIRC5/survivin which may be important for functional integrity of the kidney. Mediates renal uptake of matrix metalloproteinase MMP2 in complex with metalloproteinase inhibitor TIMP1. Mediates endocytosis of Sonic hedgehog protein N-product (ShhN), the active product of SHH. Also mediates ShhN transcytosis. In the embryonic neuroepithelium, mediates endocytic uptake and degradation of BMP4, is required for correct SHH localization in the ventral neural tube and plays a role in patterning of the ventral telencephalon. Required at the onset of neurulation to sequester SHH on the apical surface of neuroepithelial cells of the rostral diencephalon ventral midline and to control PTCH1-dependent uptake and intracellular trafficking of SHH. During neurulation, required in neuroepithelial cells for uptake of folate bound to the folate receptor FOLR1 which is necessary for neural tube closure. In the adult brain, negatively regulates BMP signaling in the subependymal zone which enables neurogenesis to proceed. In astrocytes, mediates endocytosis of ALB which is required for the synthesis of the neurotrophic factor oleic acid. Involved in neurite branching. During optic nerve development, required for SHH-mediated migration and proliferation of oligodendrocyte precursor cells. Mediates endocytic uptake and clearance of SHH in the retinal margin which protects retinal progenitor cells from mitogenic stimuli and keeps them quiescent. Plays a role in reproductive organ development by mediating uptake in reproductive tissues of androgen and estrogen bound to the sex hormone binding protein SHBG. Mediates endocytosis of angiotensin-2. Also mediates endocytosis of angiotensin 1-7. Binds to the complex composed of beta-amyloid protein 40 and CLU/APOJ and mediates its endocytosis and lysosomal degradation. Required for embryonic heart development. Required for normal hearing, possibly through interaction with estrogen in the inner ear. This chain is Low-density lipoprotein receptor-related protein 2 (Lrp2), found in Mus musculus (Mouse).